The following is a 273-amino-acid chain: MSLTNTKTGFSVKDILDLPDTNDEDGSVAEGPEEESEGPEPAKRAGPLGQGALDAVQSLPLKSPFYDSSDNPYTRWLASTEGLQYSLHGLAASAPPQDSSSKSPEPSADESPDNDKETQGGGGDAGKKRKRRVLFSKAQTYELERRFRQQRYLSAPEREHLASLIRLTPTQVKIWFQNHRYKMKRARAEKGMEVTPLPSPRRVAVPVLVRDGKPCHALKAQDLAAATFQAGIPFSAYSAQSLQHMQYNAQYSSASTPQYPTAHPLVQAQQWTW.

Disordered stretches follow at residues 1–56 and 91–131; these read MSLT…LDAV and AASA…KRKR. Residues 20–38 are compositionally biased toward acidic residues; it reads DTNDEDGSVAEGPEEESEG. The segment at residues 128-187 is a DNA-binding region (homeobox); sequence KRKRRVLFSKAQTYELERRFRQQRYLSAPEREHLASLIRLTPTQVKIWFQNHRYKMKRAR.

It belongs to the NK-2 homeobox family. As to quaternary structure, interacts with OLIG2. In terms of tissue distribution, expressed in restricted areas of the developing CNS: the hindbrain and forebrain, and pancreas.

Its subcellular location is the nucleus. In terms of biological role, transcriptional activator involved in the development of insulin-producting beta cells in the endocrine pancreas. May also be involved in specifying diencephalic neuromeric boundaries, and in controlling the expression of genes that play a role in axonal guidance. Binds to elements within the NEUROD1 promoter. The protein is Homeobox protein Nkx-2.2 (Nkx2-2) of Mus musculus (Mouse).